The sequence spans 456 residues: MKCEHCTRKECSKKSKTDDQENVSVDVPSPAQENEEKGEFHKLADAKIFLSDCLACDSCVTVEEGVQLSQQSAKDFFHVLNLNKRCDTSKHKVLVVSVCPQSLPYFAAKFNLSVTDASRRLCGFLKSLGVHYVFDTTIAADFSILESQKEFVRRYHQHSEEQRELPMLTSACPGWVRYAERVLGRPIIPYLCTAKSPQQVMGSLVKDYFARQQSLAPEKIFHIVVAPCYDKKLEALREGLSPTLNGARGTDCVLTSGEIAQIMEQSDLSVKDIAVDTLFGDVKEMAVRRHDGVSSDGHLAHVFRHAAKELFGEHVEEITYRALRNKDFHEVTLEKNGEVLLRFAAAYGFRNIQNMIMKLKKGKFPYHFVEVLACPRGCLNGRGQAQTEDGHTDRALLQQMEGIYSGIPVWPPESSTHVQELYQEWLEGTESPKVQEVLHTSYQSLEPCTDSLDIKW.

A disordered region spans residues 12–36; it reads SKKSKTDDQENVSVDVPSPAQENEE. Position 29 is a phosphoserine (Ser29).

The protein belongs to the NARF family. Interacts with LMNA and binds to the farnesylated C-terminal domain.

The protein localises to the nucleus. In Rattus norvegicus (Rat), this protein is Nuclear prelamin A recognition factor (Narf).